A 430-amino-acid polypeptide reads, in one-letter code: UPF0597 protein BDI_1130 (430 aa).

It belongs to the UPF0597 family.

This chain is UPF0597 protein BDI_1130, found in Parabacteroides distasonis (strain ATCC 8503 / DSM 20701 / CIP 104284 / JCM 5825 / NCTC 11152).